The chain runs to 639 residues: Probable potassium transport system protein Kup 1 (639 aa).

Residues Met-1–Ser-16 are compositionally biased toward polar residues. The tract at residues Met-1 to Ile-21 is disordered. 12 consecutive transmembrane segments (helical) span residues Leu-29 to Phe-49, Ile-67 to Ile-87, Ala-117 to Thr-137, Pro-154 to Val-174, Val-182 to Leu-202, Ile-220 to Leu-240, Ile-260 to Gly-280, Ala-302 to Ile-322, Ile-354 to Phe-374, Ala-383 to Met-403, Leu-411 to Ser-431, and Val-436 to Thr-456.

This sequence belongs to the HAK/KUP transporter (TC 2.A.72) family.

The protein localises to the cell inner membrane. It carries out the reaction K(+)(in) + H(+)(in) = K(+)(out) + H(+)(out). Transport of potassium into the cell. Likely operates as a K(+):H(+) symporter. The polypeptide is Probable potassium transport system protein Kup 1 (Mesorhizobium japonicum (strain LMG 29417 / CECT 9101 / MAFF 303099) (Mesorhizobium loti (strain MAFF 303099))).